Here is a 103-residue protein sequence, read N- to C-terminus: Large ribosomal subunit protein uL24 (103 aa).

The protein belongs to the universal ribosomal protein uL24 family. Part of the 50S ribosomal subunit.

One of two assembly initiator proteins, it binds directly to the 5'-end of the 23S rRNA, where it nucleates assembly of the 50S subunit. Its function is as follows. One of the proteins that surrounds the polypeptide exit tunnel on the outside of the subunit. This Bacillus spizizenii (strain ATCC 23059 / NRRL B-14472 / W23) (Bacillus subtilis subsp. spizizenii) protein is Large ribosomal subunit protein uL24 (rplX).